The primary structure comprises 625 residues: RecQ-mediated genome instability protein 1 (625 aa).

M1 is subject to N-acetylmethionine. Phosphoserine is present on S225. The segment at 257 to 282 (LTANNDTSSERCFTTGSSSNTIPTRQ) is disordered. A phosphoserine mark is found at S284 and S292. Residues K334, K387, and K426 each participate in a glycyl lysine isopeptide (Lys-Gly) (interchain with G-Cter in SUMO2) cross-link.

Belongs to the RMI1 family. In terms of assembly, component of the RMI complex, containing at least TOP3A, RMI1 and RMI2. The RMI complex interacts with BLM. Directly interacts with RMI2 and TOP3A. May bind DHJ. Interacts (via N-terminal region) with BLM; the interaction is direct.

It is found in the nucleus. Functionally, essential component of the RMI complex, a complex that plays an important role in the processing of homologous recombination intermediates to limit DNA crossover formation in cells. Promotes TOP3A binding to double Holliday junctions (DHJ) and hence stimulates TOP3A-mediated dissolution. Required for BLM phosphorylation during mitosis. Within the BLM complex, required for BLM and TOP3A stability. In Homo sapiens (Human), this protein is RecQ-mediated genome instability protein 1 (RMI1).